The following is a 488-amino-acid chain: Dihydrolipoyl dehydrogenase, mitochondrial (488 aa).

Residues 1–25 (MLRINRISNLRTFGQRFFSTEQQDV) constitute a mitochondrion transit peptide. FAD-binding positions include 52-61 (EKRGKLGGTC), K70, G134, and 163-165 (TGS). C61 and C66 are joined by a disulfide. NAD(+) is bound by residues 200-207 (GGGVIGLE), E223, V257, and G294. Residues D335 and 341–344 (MLAH) each bind FAD. Residue H467 is the Proton acceptor of the active site.

The protein belongs to the class-I pyridine nucleotide-disulfide oxidoreductase family. The cofactor is FAD.

The protein resides in the mitochondrion matrix. The enzyme catalyses N(6)-[(R)-dihydrolipoyl]-L-lysyl-[protein] + NAD(+) = N(6)-[(R)-lipoyl]-L-lysyl-[protein] + NADH + H(+). This chain is Dihydrolipoyl dehydrogenase, mitochondrial (lpd), found in Dictyostelium discoideum (Social amoeba).